Here is a 538-residue protein sequence, read N- to C-terminus: Cytosolic Fe-S cluster assembly factor NAR1 homolog (538 aa).

Positions 19, 64, 67, 70, 218, 273, 453, and 457 each coordinate [4Fe-4S] cluster.

The protein belongs to the NARF family.

The protein localises to the cytoplasm. It is found in the nucleus. Functionally, component of the cytosolic Fe/S protein assembly machinery. Required for maturation of extramitochondrial Fe/S proteins. May play a role in the transfer of pre-assembled Fe/S clusters to target apoproteins. This is Cytosolic Fe-S cluster assembly factor NAR1 homolog from Schizosaccharomyces pombe (strain 972 / ATCC 24843) (Fission yeast).